Here is a 224-residue protein sequence, read N- to C-terminus: Small ribosomal subunit protein uS3 (224 aa).

The 69-residue stretch at 38 to 106 (LREFVKEKLG…EVYLNVVEVR (69 aa)) folds into the KH type-2 domain.

It belongs to the universal ribosomal protein uS3 family. In terms of assembly, part of the 30S ribosomal subunit. Forms a tight complex with proteins S10 and S14.

In terms of biological role, binds the lower part of the 30S subunit head. Binds mRNA in the 70S ribosome, positioning it for translation. The sequence is that of Small ribosomal subunit protein uS3 from Anaeromyxobacter dehalogenans (strain 2CP-1 / ATCC BAA-258).